Here is a 624-residue protein sequence, read N- to C-terminus: tRNA uridine 5-carboxymethylaminomethyl modification enzyme MnmG (624 aa).

FAD is bound by residues 14 to 19 (GGGHAG), Val-126, and Ser-181. Residue 273–287 (GPRYCPSIEDKVVRF) coordinates NAD(+). Gln-370 contributes to the FAD binding site.

It belongs to the MnmG family. Homodimer. Heterotetramer of two MnmE and two MnmG subunits. The cofactor is FAD.

Its subcellular location is the cytoplasm. Functionally, NAD-binding protein involved in the addition of a carboxymethylaminomethyl (cmnm) group at the wobble position (U34) of certain tRNAs, forming tRNA-cmnm(5)s(2)U34. In Geotalea uraniireducens (strain Rf4) (Geobacter uraniireducens), this protein is tRNA uridine 5-carboxymethylaminomethyl modification enzyme MnmG.